Consider the following 333-residue polypeptide: Transcription initiation factor IIB (333 aa).

The TFIIB-type zinc finger occupies 33 to 64 (EVYRCPICGNDRFVYNYERGEIVCIVCGAVVQ). Zn(2+) contacts are provided by Cys37, Cys40, Cys56, and Cys59. Repeat copies occupy residues 149–232 (QELE…LREL) and 243–324 (LYIS…ELAK).

This sequence belongs to the TFIIB family.

Its function is as follows. Stabilizes TBP binding to an archaeal box-A promoter. Also responsible for recruiting RNA polymerase II to the pre-initiation complex (DNA-TBP-TFIIB). The sequence is that of Transcription initiation factor IIB from Pyrobaculum islandicum (strain DSM 4184 / JCM 9189 / GEO3).